The chain runs to 331 residues: Heme A synthase (331 aa).

Helical transmembrane passes span Val6–Phe26, Tyr87–Phe107, Ala124–Val144, Leu154–Asp174, Ile193–Leu213, Val251–Ile271, Leu279–Leu299, and Ile301–Leu321. His255 is a binding site for heme. His309 lines the heme pocket.

Belongs to the COX15/CtaA family. Type 2 subfamily. In terms of assembly, interacts with CtaB. The cofactor is heme b.

The protein localises to the cell membrane. The enzyme catalyses Fe(II)-heme o + 2 A + H2O = Fe(II)-heme a + 2 AH2. The protein operates within porphyrin-containing compound metabolism; heme A biosynthesis; heme A from heme O: step 1/1. In terms of biological role, catalyzes the conversion of heme O to heme A by two successive hydroxylations of the methyl group at C8. The first hydroxylation forms heme I, the second hydroxylation results in an unstable dihydroxymethyl group, which spontaneously dehydrates, resulting in the formyl group of heme A. The protein is Heme A synthase of Wolbachia pipientis subsp. Culex pipiens (strain wPip).